Here is a 427-residue protein sequence, read N- to C-terminus: Methylenetetrahydrofolate--tRNA-(uracil-5-)-methyltransferase TrmFO (427 aa).

An FAD-binding site is contributed by Gly6–Gly11.

The protein belongs to the MnmG family. TrmFO subfamily. FAD serves as cofactor.

Its subcellular location is the cytoplasm. The enzyme catalyses uridine(54) in tRNA + (6R)-5,10-methylene-5,6,7,8-tetrahydrofolate + NADH + H(+) = 5-methyluridine(54) in tRNA + (6S)-5,6,7,8-tetrahydrofolate + NAD(+). It catalyses the reaction uridine(54) in tRNA + (6R)-5,10-methylene-5,6,7,8-tetrahydrofolate + NADPH + H(+) = 5-methyluridine(54) in tRNA + (6S)-5,6,7,8-tetrahydrofolate + NADP(+). Catalyzes the folate-dependent formation of 5-methyl-uridine at position 54 (M-5-U54) in all tRNAs. In Acholeplasma laidlawii (strain PG-8A), this protein is Methylenetetrahydrofolate--tRNA-(uracil-5-)-methyltransferase TrmFO.